Here is a 414-residue protein sequence, read N- to C-terminus: 3-phosphoshikimate 1-carboxyvinyltransferase (414 aa).

The 3-phosphoshikimate site is built by Lys-20, Ser-21, and Arg-25. Lys-20 serves as a coordination point for phosphoenolpyruvate. The phosphoenolpyruvate site is built by Gly-85 and Arg-113. Ser-154, Ser-155, Gln-156, Ser-181, Asp-296, and Lys-323 together coordinate 3-phosphoshikimate. Residue Gln-156 participates in phosphoenolpyruvate binding. Residue Asp-296 is the Proton acceptor of the active site. Phosphoenolpyruvate-binding residues include Arg-327, Arg-371, and Lys-395.

It belongs to the EPSP synthase family. Monomer.

The protein localises to the cytoplasm. The enzyme catalyses 3-phosphoshikimate + phosphoenolpyruvate = 5-O-(1-carboxyvinyl)-3-phosphoshikimate + phosphate. It participates in metabolic intermediate biosynthesis; chorismate biosynthesis. Functionally, catalyzes the transfer of the enolpyruvyl moiety of phosphoenolpyruvate (PEP) to the 5-hydroxyl of shikimate-3-phosphate (S3P) to produce enolpyruvyl shikimate-3-phosphate and inorganic phosphate. The sequence is that of 3-phosphoshikimate 1-carboxyvinyltransferase from Saccharolobus islandicus (strain Y.G.57.14 / Yellowstone #1) (Sulfolobus islandicus).